The chain runs to 2400 residues: MNSTPRNAQAPSHRECFLPSVARTPSVTKVTPAKKITFLKRGDPRFAGVRLAVHQRAFKTFSALMDELSQRVPLSFGVRSVTTPRGLHSLSALEQLEDGGCYLCSDKKPPKTPSGPGRPQERNPTAQQLRDVEGQREAPGTSSSRKSLKTPRRILLIKNMDPRLQQTVVLSHRNTRNLAAFLGKASDLLRFPVKQLYTTSGKKVDSLQALLHSPSVLVCAGHEAFRTPAMKNARRSEAETLSGLTSRNKNGSWGPKTKPSVIHSRSPPGSTPRLPERPGPSNPPVGPAPGRHPQDTPAQSGPLVAGDDMKKKVRMNEDGSLSVEMKVRFHLVGEDTLLWSRRMGRASALTAASGEDPVLGEVDPLCCVWEGYPWGFSEPGVWGPRPCRVGCREVFGRGGQPGPKYEIWTNPLHASQGERVAARKRWGLAQHVRCSGLWGHGTAGRERCSQDSASPASSTGLPEGSEPESSCCPRTPEDGVDSASPSAQIGAERKAGGSLGEDPGLCIDGAGLGGPEQGGRLTPRARSEEGASSDSSASTGSHEGSSEWGGRPQGCPGKARAETSQQEASEGGDPASPALSLSSLRSDDLQAETQGQGTEQATGAAVTREPLVLGLSCSWDSEGASSTPSTCTSSQQGQRRHRSRASAMSSPSSPGLGRVAPRGHPRHSHYRKDTHSPLDSSVTKQVPRPPERRRACQDGSVPRYSGSSSSTRTQASGNLRPPSSGSLPSQDLLGTSSATVTPAVHSDFVSGVSPHNAPSAGWAGDAGSRTCSPAPIPPHTSDSCSKSGAASLGEEARDTPQPSSPLVLQVGRPEQGAVGPHRSHCCSQPGTQPAQEAQRGPSPEASWLCGRYCPTPPRGRPCPQRRSSSCGSTGSSHQSTARGPGGSPQEGTRQPGPTPSPGPNSGASRRSSASQGAGSRGLSEEKTLRSGGGPQGQEEASGVSPSSLPRSSPEAVVREWLDNIPEEPILMTYELADETTGAAGGGLRGPEVDPGDDHSLEGLGEPAQAGQQSLEGDPGQDPEPEGALLGSSDTGPQSGEGVPQGAAPEGVSEAPAEAGADREAPAGCRVSLRALPGRVSASTQIMRALMGSKQGRPSSVPEVSRPMARRLSCSAGALITCLASLQLFEEDLGSPASKVRFKDSPRYQELLSISKDLWPGCDVGEDQLDSGLWELTWSQALPDLGSHAMTENFTPTSSSGVDISSGSGGSGESSVPCAMDGTLVTQGTELPLKTSNQRPDSRTYESPGDLENQQQCCFPTFLNARACACATNEDEAERDSEEQRASSNLEQLAENTVQEEVQLEETKEGTEGEGLQEEAVQLEETKTEEGLQEEGVQLEETKETEGEGQQEEEAQLEEIEETGGEGLQEEGVQLEEVKEGPEGGLQGEALEEGLKEEGLPEEGSVHGQELSEASSPDGKGSQEDDPVQEEEAGRASASAEPCPAEGTEEPTEPPSHLSETDPSASERQSGSQLEPGLEKPPGATMMGQEHTQAQPTQGAAERSSSVACSAALDCDPIWVSVLLKKTEKAFLAHLASAVAELRARWGLQDNDLLDQMAAELQQDVAQRLQDSTKRELQKLQGRAGRMVLEPPREALTGELLLQTQQRRHRLRGLRNLSAFSERTLGLGPLSFTLEDEPALSTALGSQLGEEAEGEEFCPCEACVRKKVSPMSPKATMGATRGPIKEAFDLQQILQRKRGEHTDGEAAEVAPGKTHTDPTSTRTVQGAEGGLGPGLSQGPGVDEGEDGEGSQRLNRDKDPKLGEAEGDAMAQEREGKTHNSETSAGSELGEAEQEGEGISERGETGGQGSGHEDNLQGEAAAGGDQDPGQSDGAEGIEAPEAEGEAQPESEGVEAPEAEGDAQEAEGEAQPESEDVEAPEAEGEAQPESEDVETPEAEWEVQPESEGAEAPEAEKEAQPETESVEALETEGEDEPESEGAEAQEAEEAAQEAEGQTQPESEVIESQEAEEEAQPESEDVEALEVEVETQEAEGEAQPESEDVEAPEAEGEMQEAEEEAQPESDGVEAQPKSEGEEAQEVEGETQKTEGDAQPESDGVEAPEAEEEAQEAEGEVQEAEGEAHPESEDVDAQEAEGEAQPESEGVEAPEAEGEAQKAEGIEAPETEGEAQPESEGIEAPEAEGEAQPESEGVEAQDAEGEAQPESEGIEAQEAEEEAQPELEGVEAPEAEGEAQPESEGIEAPEAEGEAQPELEGVEAPEAEEEAQPEPEGVETPEAEGEAQPESEGETQGEKKGSPQVSLGDGQSEEASESSSPVPEDRPTPPPSPGGDTPHQRPGSQTGPSSSRASSWGNCWQKDSENDHVLGDTRSPDAKSTGTPHAERKATRMYPESSTSEQEEAPLGSRTPEQGASEGYDLQEDQALGSLAPTEAVGRADGFGQDDLDF.

Doublecortin domains lie at K34–R118 and R152–K231. 6 disordered regions span residues C104–R152, M230–K310, G444–A1064, A1188–E1251, E1275–E1501, and R1697–F2400. Over residues S242–G251 the composition is skewed to polar residues. The span at R277 to P287 shows a compositional bias: pro residues. Residues Q450–G460 are compositionally biased toward polar residues. Composition is skewed to low complexity over residues G530 to E543 and D573 to L584. The span at A591 to A601 shows a compositional bias: polar residues. 2 stretches are compositionally biased toward low complexity: residues S625–G637 and A645–P654. Over residues P661–Y670 the composition is skewed to basic residues. 2 stretches are compositionally biased toward polar residues: residues T711–V740 and C825–Q835. 3 stretches are compositionally biased toward low complexity: residues Q864–T880, P903–G921, and S941–P953. Composition is skewed to polar residues over residues L1223–R1238 and A1285–E1299. The 1-1; approximate repeat unit spans residues L1292 to K1307. The interval L1292–K1342 is 3 X 16 AA approximate tandem repeats of T-E-E-G-L-Q-E-E-G-V-Q-L-E-E-T-K. The 1-2; approximate repeat unit spans residues T1310–K1326. Residues T1327–K1342 form a 1-3 repeat. Residues G1346–G1363 are compositionally biased toward acidic residues. Positions R1434–E1445 are enriched in low complexity. Composition is skewed to polar residues over residues T1460–Q1472 and E1489–E1501. Residues A1726 to Q1736 are compositionally biased toward gly residues. 2 stretches are compositionally biased toward basic and acidic residues: residues L1752–E1762 and A1769–N1778. 3 tandem repeats follow at residues E1836–V1851, E1852–A1867, and E1875–V1890. Composition is skewed to acidic residues over residues E1836–P1909 and E1920–Q1948. The tract at residues E1836–E2244 is 25 X 16 AA approximate tandem repeats of [ED]-[AT]-[PQ]-[ED]-[AVT]-E-[GKE]-[ED]-[AMT]-Q-[EPK]-[EAT]-[TSELP]-[EG]-[EGSQDI]-[AVIE]. A 2-4; approximate repeat occupies E1891 to A1906. The 2-5 repeat unit spans residues E1907–S1921. Residues E1923 to A1938 form a 2-6; approximate repeat. A coiled-coil region spans residues E1934 to Q2017. One copy of the 2-7 repeat lies at E1939 to T1954. The segment covering E1949–S1958 has biased composition (low complexity). The stretch at Q1955–A1970 is one 2-8; approximate repeat. Composition is skewed to acidic residues over residues E1959–G2022, A2048–E2075, E2083–G2108, and E2117–T2245. A 2-9; approximate repeat occupies Q1971 to V1984. 2 tandem repeats follow at residues E1985–V2000 and E2001–A2016. Residues Q2017–G2031 form a 2-12; approximate repeat. A 2-13d repeat occupies E2033 to A2048. Positions G2054–E2081 form a coiled coil. The stretch at E2056–V2071 is one 2-14 repeat. A 2-15; approximate repeat occupies Q2072–V2085. Repeat copies occupy residues D2086 to V2101, E2102 to I2116, E2117 to I2132, E2133 to V2148, E2149 to I2164, E2165 to V2180, E2181 to I2196, E2197 to V2212, E2213 to V2228, and E2229 to E2244. Positions P2292–N2308 are enriched in polar residues. The span at K2312–D2327 shows a compositional bias: basic and acidic residues.

Interacts with RP1; has a synergistic effect with RP1 in photoreceptor differentiation. Retinal-specific; expressed in photoreceptor.

The protein resides in the cytoplasm. The protein localises to the cytoskeleton. Its subcellular location is the cilium axoneme. It localises to the cell projection. It is found in the cilium. The protein resides in the photoreceptor outer segment. Functionally, required for the differentiation of photoreceptor cells. Plays a role in the organization of outer segment of rod and cone photoreceptors. The polypeptide is Retinitis pigmentosa 1-like 1 protein (RP1L1) (Homo sapiens (Human)).